The following is a 287-amino-acid chain: Phosphatidylinositol transfer protein 5 (287 aa).

The disordered stretch occupies residues 252–287 (FHNNNNNNSNNSNNNNNNNTQPQRSSFFSRSTDGNK). A compositionally biased stretch (low complexity) spans 254–270 (NNNNNNSNNSNNNNNNN). Positions 271–287 (TQPQRSSFFSRSTDGNK) are enriched in polar residues.

This sequence belongs to the PtdIns transfer protein family. PI transfer class IIA subfamily.

Its function is as follows. Phosphatidylinositol transfer proteins mediate the monomeric transport of lipids by shielding a lipid from the aqueous environment and binding the lipid in a hydrophobic cavity. This is Phosphatidylinositol transfer protein 5 (pitE) from Dictyostelium discoideum (Social amoeba).